A 114-amino-acid chain; its full sequence is BolA-like protein DDB_G0274169 (114 aa).

Residues 88-98 (TQWKKNNQTKI) are compositionally biased toward polar residues. The segment at 88 to 114 (TQWKKNNQTKINVDDDKSPSCKGGFGK) is disordered.

It belongs to the BolA/IbaG family.

The chain is BolA-like protein DDB_G0274169 from Dictyostelium discoideum (Social amoeba).